Here is a 219-residue protein sequence, read N- to C-terminus: Ras-related protein Rab-3B (219 aa).

Ala-2 is subject to N-acetylalanine. Residues Ser-31, Ser-32, Val-33, Gly-34, Lys-35, Thr-36, Ser-37, Pro-49, and Ser-53 each coordinate GTP. Thr-36 contributes to the Mg(2+) binding site. The Switch 1 motif lies at 45–58 (DTFTPAFVSTVGID). Residues Thr-54 and Asp-77 each contribute to the Mg(2+) site. Residues 78–96 (TAGQERYRTITTAYYRGAM) carry the Switch 2 motif. Gly-80 serves as a coordination point for GTP. Thr-86 is subject to Phosphothreonine; by LRRK2. Residues Asn-135, Lys-136, Asp-138, Ala-166, and Lys-167 each contribute to the GTP site. Ser-188 and Ser-190 each carry phosphoserine. S-geranylgeranyl cysteine attachment occurs at residues Cys-217 and Cys-219. Cys-219 is modified (cysteine methyl ester).

Belongs to the small GTPase superfamily. Rab family. Interacts with RIMS1, RIMS2, RPH3A and RPH3AL. The GTP-bound form interacts with GAS8/DRC4 (via coiled-coil domains). Interacts with GDI2, CHM and CHML; phosphorylation at Thr-86 disrupts these interactions. Interacts with MADD (via uDENN domain); the GTP-bound form is preferred for interaction. Mg(2+) is required as a cofactor. Post-translationally, phosphorylation of Thr-86 in the switch II region by LRRK2 prevents the association of RAB regulatory proteins, including CHM, CHML and RAB GDP dissociation inhibitor GDI2. As to expression, abundantly expressed in testis, lung and brain.

The protein localises to the cell membrane. It is found in the golgi apparatus. The catalysed reaction is GTP + H2O = GDP + phosphate + H(+). Regulated by guanine nucleotide exchange factors (GEFs) which promote the exchange of bound GDP for free GTP. Regulated by GTPase activating proteins (GAPs) which increase the GTP hydrolysis activity. Inhibited by GDP dissociation inhibitors (GDIs) which prevent Rab-GDP dissociation. The small GTPases Rab are key regulators of intracellular membrane trafficking, from the formation of transport vesicles to their fusion with membranes. Rabs cycle between an inactive GDP-bound form and an active GTP-bound form that is able to recruit to membranes different sets of downstream effectors directly responsible for vesicle formation, movement, tethering and fusion. In Mus musculus (Mouse), this protein is Ras-related protein Rab-3B.